The primary structure comprises 244 residues: 5-oxoprolinase subunit A (244 aa).

The protein belongs to the LamB/PxpA family. In terms of assembly, forms a complex composed of PxpA, PxpB and PxpC.

It catalyses the reaction 5-oxo-L-proline + ATP + 2 H2O = L-glutamate + ADP + phosphate + H(+). Functionally, catalyzes the cleavage of 5-oxoproline to form L-glutamate coupled to the hydrolysis of ATP to ADP and inorganic phosphate. This chain is 5-oxoprolinase subunit A, found in Salmonella typhimurium (strain LT2 / SGSC1412 / ATCC 700720).